A 394-amino-acid polypeptide reads, in one-letter code: Elongation factor Tu (394 aa).

The tr-type G domain maps to 10–204 (KPHVNVGTIG…FLDSYIPEPE (195 aa)). The segment at 19-26 (GHVDHGKT) is G1. 19 to 26 (GHVDHGKT) contributes to the GTP binding site. Thr26 contributes to the Mg(2+) binding site. Residues 60–64 (GITIN) form a G2 region. The G3 stretch occupies residues 81–84 (DCPG). GTP is bound by residues 81–85 (DCPGH) and 136–139 (NKCD). Residues 136–139 (NKCD) form a G4 region. A G5 region spans residues 174–176 (SAL).

Belongs to the TRAFAC class translation factor GTPase superfamily. Classic translation factor GTPase family. EF-Tu/EF-1A subfamily. In terms of assembly, monomer.

It localises to the cytoplasm. It catalyses the reaction GTP + H2O = GDP + phosphate + H(+). Its function is as follows. GTP hydrolase that promotes the GTP-dependent binding of aminoacyl-tRNA to the A-site of ribosomes during protein biosynthesis. The polypeptide is Elongation factor Tu (Salmonella arizonae (strain ATCC BAA-731 / CDC346-86 / RSK2980)).